Reading from the N-terminus, the 119-residue chain is Ribonuclease P protein component (119 aa).

It belongs to the RnpA family. As to quaternary structure, consists of a catalytic RNA component (M1 or rnpB) and a protein subunit.

The catalysed reaction is Endonucleolytic cleavage of RNA, removing 5'-extranucleotides from tRNA precursor.. Functionally, RNaseP catalyzes the removal of the 5'-leader sequence from pre-tRNA to produce the mature 5'-terminus. It can also cleave other RNA substrates such as 4.5S RNA. The protein component plays an auxiliary but essential role in vivo by binding to the 5'-leader sequence and broadening the substrate specificity of the ribozyme. This chain is Ribonuclease P protein component, found in Bifidobacterium longum (strain DJO10A).